Consider the following 360-residue polypeptide: Aminomethyltransferase (360 aa).

It belongs to the GcvT family. As to quaternary structure, the glycine cleavage system is composed of four proteins: P, T, L and H.

The catalysed reaction is N(6)-[(R)-S(8)-aminomethyldihydrolipoyl]-L-lysyl-[protein] + (6S)-5,6,7,8-tetrahydrofolate = N(6)-[(R)-dihydrolipoyl]-L-lysyl-[protein] + (6R)-5,10-methylene-5,6,7,8-tetrahydrofolate + NH4(+). Its function is as follows. The glycine cleavage system catalyzes the degradation of glycine. The chain is Aminomethyltransferase from Legionella pneumophila (strain Corby).